The primary structure comprises 500 residues: MAWAALLGLLAALLLLLLLSRRRTRRPGEPPLDLGSIPWLGYALDFGKDAASFLTRMKEKHGDIFTILVGGRYVTVLLDPHSYDAVVWEPRTRLDFHAYAIFLMERIFDVQLPHYSPSDEKARMKLTLLHRELQALTEAMYTNLHAVLLGDATEAGSGWHEMGLLDFSYSFLLRAGYLTLYGIEALPRTHESQAQDRVHSADVFHTFRQLDRLLPKLARGSLSVGDKDHMCSVKSRLWKLLSPARLARRAHRSKWLESYLLHLEEMGVSEEMQARALVLQLWATQGNMGPAAFWLLLFLLKNPEALAAVRGELESILWQAEQPVSQTTTLPQKVLDSTPVLDSVLSESLRLTAAPFITREVVVDLAMPMADGREFNLRRGDRLLLFPFLSPQRDPEIYTDPEVFKYNRFLNPDGSEKKDFYKDGKRLKNYNMPWGAGHNHCLGRSYAVNSIKQFVFLVLVHLDLELINADVEIPEFDLSRYGFGLMQPEHDVPVRYRIRP.

A helical membrane pass occupies residues 1–20 (MAWAALLGLLAALLLLLLLS). Substrate-binding positions include Arg-106, Leu-112, Asn-287, 358–359 (TR), and Arg-382. Position 441 (Cys-441) interacts with heme.

Belongs to the cytochrome P450 family. The cofactor is heme. Widely expressed; particularly abundant in ovary, heart, skeletal muscle, lung and prostate.

The protein resides in the endoplasmic reticulum membrane. The catalysed reaction is prostaglandin H2 = prostaglandin I2. The enzyme catalyses a hydroperoxyeicosatetraenoate = an oxoeicosatetraenoate + H2O. It carries out the reaction (15S)-hydroperoxy-(5Z,8Z,11Z,13E)-eicosatetraenoate = 15-oxo-(5Z,8Z,11Z,13E)-eicosatetraenoate + H2O. It catalyses the reaction (15S)-hydroperoxy-(5Z,8Z,11Z,13E)-eicosatetraenoate + AH2 = (15S)-hydroxy-(5Z,8Z,11Z,13E)-eicosatetraenoate + A + H2O. Catalyzes the biosynthesis and metabolism of eicosanoids. Catalyzes the isomerization of prostaglandin H2 to prostacyclin (= prostaglandin I2), a potent mediator of vasodilation and inhibitor of platelet aggregation. Additionally, displays dehydratase activity, toward hydroperoxyeicosatetraenoates (HPETEs), especially toward (15S)-hydroperoxy-(5Z,8Z,11Z,13E)-eicosatetraenoate (15(S)-HPETE). This is Prostacyclin synthase (PTGIS) from Homo sapiens (Human).